A 249-amino-acid polypeptide reads, in one-letter code: Mediator of RNA polymerase II transcription subunit 19 (249 aa).

2 disordered regions span residues 1-68 and 178-249; these read MEGF…SSRR and QPPK…SGLR. Residues 9–18 show a composition bias toward low complexity; that stretch reads AASEPSSIPS. The segment covering 45–56 has biased composition (pro residues); that stretch reads VPGPPLPIPPPL. 2 stretches are compositionally biased toward basic residues: residues 179 to 190 and 221 to 233; these read PPKKKNKKHKQS and RRKK…KKSR.

It belongs to the Mediator complex subunit 19 family. As to quaternary structure, component of the Mediator complex.

It localises to the nucleus. Its function is as follows. Component of the Mediator complex, a coactivator involved in the regulated transcription of nearly all RNA polymerase II-dependent genes. Mediator functions as a bridge to convey information from gene-specific regulatory proteins to the basal RNA polymerase II transcription machinery. Mediator is recruited to promoters by direct interactions with regulatory proteins and serves as a scaffold for the assembly of a functional preinitiation complex with RNA polymerase II and the general transcription factors. The polypeptide is Mediator of RNA polymerase II transcription subunit 19 (med19) (Xenopus tropicalis (Western clawed frog)).